We begin with the raw amino-acid sequence, 880 residues long: MCSETGTGVPERNGCADSFSPSVMIARKLYGCDLCERLLTNPRMAGMSLDRQHGHPITFPLPIRTKPVLVARAPMGSGKTTALIDWLTAFLDSEDKSAVIVSCRRSFTNSLSRRFQRDGLTGFTTYLDSDQYVLTEAAHRRLLVQLESLQRISDSLLDRYDVLVVDEVMSIVAQFFSPTMRRLRLVDSMFTSLLRRCRHVIAMDATVNATLVELLAELRGAENVHVVVSDFVSRGFANRECVVMSSLGAALPASMVRYAPPAGDESREASASQPPPHDSSNEPCAPEITDADIESTEGSFFHELHVRLLQGENVCVFSSTLAFSRIVAFFCAEVLSPDAVLLLNSTSPPVDTSDWSRYKVVVYTTVVTVGLSFDDSHFHTMFAFVKPSIHGPDMMAVYQAMGRVRSLIRDRLFMYMDVSSANEGPTFTPMLLNAEIGSATAWPPEILIPANTMCLRFKDRCSSALLDHHRALFSRFKTKHYLERSTLTSANDSFSLLHTLLANNKIAVRMRGDRPDAPASAILVEDFGRFLSRLRTDAFSNRRFLRRITYAIEEAASAMRERVALRNPTAEETVMMLAENQAARSCMERFFGLRGAVDDYGEPIIALMKDMGDVPLVAARLVNAAVIEAGCACSAGEWYVVDLAAEHASHGSSEFDKWMNYYLDEPLVSLKRGRPEEVQIPIQPGIRGRTALLRACVNVARQIGWRPTTWNDDAELEAADVERAMATAIEAGLGKFALEYMRLNFTEPSWLTGPIRNLQRFLGARKRHAAHGIGPSEQRKESPEICIFRTLWAELFGVRILKSQRTFPGTTRVKNLRKEHLKALLDRIEVRYPESSTHKQLYGLLRENQYRFSNSPKLLLRTPDWMRQLSGNRPQAEQAP.

One can recognise a Helicase ATP-binding domain in the interval 60 to 225; that stretch reads PLPIRTKPVL…AELRGAENVH (166 aa). 73 to 80 is an ATP binding site; the sequence is APMGSGKT. The disordered stretch occupies residues 260 to 287; sequence PPAGDESREASASQPPPHDSSNEPCAPE.

Belongs to the herpesviridae OriBP family. Homodimer. Interacts with the major DNA-binding protein. Interacts with the DNA helicase/primase complex-associated protein and the polymerase accessory protein.

The protein resides in the host nucleus. Its function is as follows. Functions as a docking protein to recruit essential components of the viral replication machinery to viral DNA origins. In the presence of the major DNA-binding protein, opens dsDNA leading to a conformational change in the origin that facilitates DNA unwinding and subsequent replication. The sequence is that of Replication origin-binding protein (UL9) from Psittacid herpesvirus 1 (isolate Amazon parrot/-/97-0001/1997) (PsHV-1).